Reading from the N-terminus, the 286-residue chain is Polyamine aminopropyltransferase (286 aa).

The region spanning 5-238 (TMWHETLHDQ…GIMTFAWATD (234 aa)) is the PABS domain. Q33 provides a ligand contact to S-methyl-5'-thioadenosine. 2 residues coordinate spermidine: H64 and D88. S-methyl-5'-thioadenosine is bound by residues E108 and 140–141 (DG). Catalysis depends on D158, which acts as the Proton acceptor. Position 158–161 (158–161 (DCTD)) interacts with spermidine. P165 is a binding site for S-methyl-5'-thioadenosine.

Belongs to the spermidine/spermine synthase family. As to quaternary structure, homodimer or homotetramer.

It is found in the cytoplasm. It carries out the reaction S-adenosyl 3-(methylsulfanyl)propylamine + putrescine = S-methyl-5'-thioadenosine + spermidine + H(+). Its pathway is amine and polyamine biosynthesis; spermidine biosynthesis; spermidine from putrescine: step 1/1. In terms of biological role, catalyzes the irreversible transfer of a propylamine group from the amino donor S-adenosylmethioninamine (decarboxy-AdoMet) to putrescine (1,4-diaminobutane) to yield spermidine. This is Polyamine aminopropyltransferase from Salmonella arizonae (strain ATCC BAA-731 / CDC346-86 / RSK2980).